The chain runs to 111 residues: NADH-ubiquinone oxidoreductase chain 3 (111 aa).

Helical transmembrane passes span 2–22 (ILIW…GMFV), 54–74 (FFVI…LLPM), and 82–102 (PTTY…FYEW).

The protein belongs to the complex I subunit 3 family.

Its subcellular location is the mitochondrion membrane. The catalysed reaction is a ubiquinone + NADH + 5 H(+)(in) = a ubiquinol + NAD(+) + 4 H(+)(out). Its function is as follows. Core subunit of the mitochondrial membrane respiratory chain NADH dehydrogenase (Complex I) that is believed to belong to the minimal assembly required for catalysis. Complex I functions in the transfer of electrons from NADH to the respiratory chain. The immediate electron acceptor for the enzyme is believed to be ubiquinone. The polypeptide is NADH-ubiquinone oxidoreductase chain 3 (ND3) (Artemia franciscana (Brine shrimp)).